The chain runs to 445 residues: C-terminal-binding protein 2 (445 aa).

Asymmetric dimethylarginine is present on arginine 22. NAD(+)-binding positions include serine 106, 186–191 (IGFGRT), aspartate 210, 243–249 (CNLNEHN), 270–272 (AAR), and aspartate 296. Residue arginine 272 is part of the active site. Glutamate 301 is an active-site residue. Catalysis depends on histidine 321, which acts as the Proton donor. Residue 321–324 (HTAW) participates in NAD(+) binding. A disordered region spans residues 414–445 (THNLPTVAHPSQAPSPNQPTKHGDNREHPNEQ). Serine 428 bears the Phosphoserine mark. A compositionally biased stretch (basic and acidic residues) spans 434–445 (KHGDNREHPNEQ).

It belongs to the D-isomer specific 2-hydroxyacid dehydrogenase family. In terms of assembly, interacts with the C-terminus of adenovirus E1A protein. Can form homodimers or heterodimers of CTBP1 and CTBP2. Interacts with HIPK2. Interacts with ZNF217, PNN, NRIP1 and WIZ. Interacts with PRDM16; represses white adipose tissue (WAT)-specific genes expression. Interacts with MCRIP1. Isoform 2 is specifically localized in synaptic ribbon (at protein level).

Its subcellular location is the nucleus. The protein resides in the synapse. Its function is as follows. Corepressor targeting diverse transcription regulators. Functions in brown adipose tissue (BAT) differentiation. Isoform 2 probably acts as a scaffold for specialized synapses. The polypeptide is C-terminal-binding protein 2 (CTBP2) (Bos taurus (Bovine)).